A 195-amino-acid polypeptide reads, in one-letter code: E3 ubiquitin-protein ligase ZNRF1 (195 aa).

Residues 1–10 (MGGKQSSASR) are compositionally biased toward polar residues. The interval 1–37 (MGGKQSSASRSRAPFPGVSSDDSAVPPSSNFGHFRGG) is disordered. G2 is lipidated: N-myristoyl glycine. The segment covering 18–29 (VSSDDSAVPPSS) has biased composition (low complexity). An RING-type; atypical zinc finger spans residues 152 to 193 (CVICLEELSQGDTIARLPCLCIYHKSCIDSWFEVNRCCPEHP).

Its subcellular location is the endosome. The protein localises to the lysosome. It is found in the membrane. It carries out the reaction S-ubiquitinyl-[E2 ubiquitin-conjugating enzyme]-L-cysteine + [acceptor protein]-L-lysine = [E2 ubiquitin-conjugating enzyme]-L-cysteine + N(6)-ubiquitinyl-[acceptor protein]-L-lysine.. Its pathway is protein modification; protein ubiquitination. Its function is as follows. E3 ubiquitin-protein ligase that plays a role in neuron cells differentiation. Plays a role in the establishment and maintenance of neuronal transmission and plasticity. The sequence is that of E3 ubiquitin-protein ligase ZNRF1 (znrf1) from Xenopus laevis (African clawed frog).